Reading from the N-terminus, the 396-residue chain is Seminal vesicle major clotting proteins (396 aa).

The first 21 residues, 1-21, serve as a signal peptide directing secretion; it reads MKSTIFFILSLLLMLENQAAG. The segment at 45–178 is disordered; it reads MEEAVSGSGL…ASSVDHRKKG (134 aa). The segment covering 60-152 has biased composition (basic and acidic residues); the sequence is RGSDREESVG…RVSVRHERVE (93 aa). 3 SVP-3/-4 repeat repeats span residues 65–88, 89–112, and 113–136; these read EESV…RSSV, EEPE…RHNV, and EEPE…RHSA. The stretch at 137-157 is one SVP-3/-4 repeat; truncated repeat; that stretch reads EEPEGERVSVRHERVEKTHKR. A propeptide spanning residues 177 to 192 is cleaved from the precursor; sequence KGHIRFKRQDPIAALA. 8 SVP-1 clotting repeats span residues 194–217, 218–241, 242–265, 266–289, 290–313, 314–337, 338–361, and 362–385; these read IEGQ…ERFS, VKGQ…ERFS, VTGQ…ERFS, MTGQ…ERFS, and VSGQ…SGFS. The tract at residues 194–396 is 9 X tandem repeats of SVP-1 like motif; sequence IEGQDAVKDS…KGQGSLKGLI (203 aa). Positions 377-396 are disordered; sequence QESVQSGFSVKGQGSLKGLI. The SVP-1 clotting 9; truncated repeat unit spans residues 386–396; that stretch reads VKGQGSLKGLI.

To the SVP-2 precursor, particularly in regions where protein processing must occur. Post-translationally, SVP-3 may be a post-translationally modified form of SVP-4. In terms of processing, covalent clotting of SVP-1 is catalyzed by a transglutaminase secreted by the anterior prostate through the formation of gamma-glutamyl-epsilon-lysine cross-links. The conserved 2 Lys and 1 Gln residues per functional unit seem to be the residues involved in the formation of those cross-links.

It localises to the secreted. Functionally, SVP-1 serves as substrate in the formation of the copulatory plug. SVP-3 and SVP-4 may also contribute to the clot. This chain is Seminal vesicle major clotting proteins, found in Cavia porcellus (Guinea pig).